Consider the following 1039-residue polypeptide: uncharacterized protein (1039 aa).

This is an uncharacterized protein from Treponema pallidum (strain Nichols).